The primary structure comprises 1472 residues: Adhesion G protein-coupled receptor L1 (1472 aa).

Residues 1 to 24 form the signal peptide; it reads MARLAAVLWSLCVTAILVTSATQG. Topologically, residues 25-857 are extracellular; that stretch reads LSRAGLPFGL…EIYQGRINEL (833 aa). The SUEL-type lectin domain maps to 40 to 129; it reads ACEGYPIELR…KYLEVQYDCV (90 aa). 5 disulfide bridges follow: C41–C71, C50–C128, C83–C115, C96–C102, and C140–C322. E42 contributes to the alpha-L-rhamnose binding site. A glycan (N-linked (GlcNAc...) asparagine) is linked at N98. 117-120 contributes to the alpha-L-rhamnose binding site; the sequence is GTYK. Residues 139–398 form the Olfactomedin-like domain; the sequence is VCPGTLQKVL…VVRYSLEFGP (260 aa). A disordered region spans residues 400–468; sequence DPSAGPATSP…APAPSTRRPP (69 aa). Residues 405 to 441 show a composition bias toward low complexity; the sequence is PATSPPLSTTTTARPTPLTSTASPAATTPLRRAPLTT. A compositionally biased stretch (pro residues) spans 453–468; the sequence is DLPPATAPAPSTRRPP. 2 cysteine pairs are disulfide-bonded: C480–C515 and C503–C532. N-linked (GlcNAc...) asparagine glycosylation is found at N531, N640, N741, N800, N805, and N826. The region spanning 669 to 850 is the GAIN-B domain; the sequence is PARFLAAKQN…AVLMAHREIY (182 aa). 2 cysteine pairs are disulfide-bonded: C801/C832 and C820/C834. The segment at 801–850 is GPS; that stretch reads CSFWNYSERSMLGYWSTQGCRLVESNKTHTTCACSHLTNFAVLMAHREIY. The helical transmembrane segment at 858–878 threads the bilayer; it reads LLSVITWVGIVISLVCLAICI. The Cytoplasmic portion of the chain corresponds to 879-892; sequence STFCFLRGLQTDRN. Residues 893-913 form a helical membrane-spanning segment; sequence TIHKNLCINLFLAELLFLVGI. Residues 914 to 919 lie on the Extracellular side of the membrane; sequence DKTQYE. The helical transmembrane segment at 920-940 threads the bilayer; that stretch reads IACPIFAGLLHYFFLAAFSWL. Residues 941 to 963 are Cytoplasmic-facing; it reads CLEGVHLYLLLVEVFESEYSRTK. Residues 964–984 traverse the membrane as a helical segment; that stretch reads YYYLGGYCFPALVVGIAAAID. At 985 to 1001 the chain is on the extracellular side; sequence YRSYGTEKACWLRVDNY. Residues 1002 to 1022 form a helical membrane-spanning segment; that stretch reads FIWSFIGPVSFVIVVNLVFLM. Residues 1023–1049 lie on the Cytoplasmic side of the membrane; that stretch reads VTLHKMVRSSSVLKPDSSRLDNIKSWA. A helical membrane pass occupies residues 1050–1070; it reads LGAIALLFLLGLTWAFGLLFI. At 1071–1074 the chain is on the extracellular side; sequence NKES. Residues 1075-1095 traverse the membrane as a helical segment; sequence VVMAYLFTTFNAFQGVFIFVF. Residues 1096-1472 are Cytoplasmic-facing; sequence HCALQKKVHK…DGQMQLVTSL (377 aa). Residue R1193 is modified to Omega-N-methylarginine. S1219 is modified (phosphoserine). 4 disordered regions span residues 1247 to 1271, 1291 to 1325, 1358 to 1427, and 1449 to 1472; these read FNNS…PRGR, NLRG…GGPG, ESES…SRPP, and YLAA…VTSL. Composition is skewed to pro residues over residues 1301–1313 and 1406–1418; these read GPPP…PPVP and ALPP…PGPP. Phosphoserine is present on S1471.

Belongs to the G-protein coupled receptor 2 family. Adhesion G-protein coupled receptor (ADGR) subfamily. In terms of assembly, forms a heterodimer, consisting of a large extracellular region (p120) non-covalently linked to a seven-transmembrane moiety (p85). Interacts with syntaxin and with proteins of the SHANK family via the PDZ domain. Interacts (via extracellular domain) with FLRT1, FLRT2 and FLRT3 (via extracellular domain). Post-translationally, autoproteolytically cleaved into 2 subunits, an extracellular subunit and a seven-transmembrane subunit. This proteolytic processing takes place early in the biosynthetic pathway, either in the endoplasmic reticulum or in the early compartment of the Golgi apparatus. Brain-specific expression but low levels are also detected in kidney, lung and spleen.

The protein resides in the cell membrane. Its subcellular location is the cell projection. The protein localises to the axon. It localises to the growth cone. It is found in the synapse. The protein resides in the presynaptic cell membrane. Its subcellular location is the synaptosome. Functionally, calcium-independent receptor of high affinity for alpha-latrotoxin, an excitatory neurotoxin present in black widow spider venom which triggers massive exocytosis from neurons and neuroendocrine cells. Receptor for TENM2 that mediates heterophilic synaptic cell-cell contact and postsynaptic specialization. Receptor probably implicated in the regulation of exocytosis. This is Adhesion G protein-coupled receptor L1 from Bos taurus (Bovine).